We begin with the raw amino-acid sequence, 365 residues long: DNA replication and repair protein RecF (365 aa).

30–37 (GDNGEGKT) is a binding site for ATP.

Belongs to the RecF family.

It localises to the cytoplasm. In terms of biological role, the RecF protein is involved in DNA metabolism; it is required for DNA replication and normal SOS inducibility. RecF binds preferentially to single-stranded, linear DNA. It also seems to bind ATP. This chain is DNA replication and repair protein RecF, found in Leptospira borgpetersenii serovar Hardjo-bovis (strain JB197).